We begin with the raw amino-acid sequence, 184 residues long: Cobalamin adenosyltransferase (184 aa).

Positions 1 to 21 (MGNRLSKIATRTGDAGTTGLG) are disordered. ATP is bound by residues 10-13 (TRTG), 18-19 (TG), Lys28, 130-134 (RRAER), and Asn154.

It belongs to the Cob(I)alamin adenosyltransferase family. In terms of assembly, homotrimer.

It carries out the reaction 2 cob(II)alamin + AH2 + 2 ATP = 2 adenosylcob(III)alamin + 2 triphosphate + A + 2 H(+). With respect to regulation, is potentially allosterically regulated by GTP/GDP, which enhances its affinity for AdoCbl by 5-fold. Binds cob(II)alamin weakly in the absence of ATP. The presence of ATP (but not GTP or GDP) increases the affinity of cob(II)alamin for the enzyme, and stoichiometric binding is observed. GTP blocks the transfer of cob(II)alamin to IcmF from ATR, thus averting its reconstitution with inactive cofactor. Its function is as follows. Adenosyltransferase that catalyzes the conversion of cob(II)alamin to adenosylcob(III)alamin (AdoCbl) in the presence of ATP and an electron donor. Acts as an accessory protein of IcmF that functions in cofactor repair, since IcmF is prone to inactivation during catalytic turnover due to the occasional loss of the 5'-deoxyadenosine moiety and formation of the inactive cob(II)alamin cofactor in its active site. Thus, receives and repairs the inactive cofactor, which is then reloaded onto IcmF in a GTPase-gated step. This chain is Cobalamin adenosyltransferase, found in Cupriavidus metallidurans (strain ATCC 43123 / DSM 2839 / NBRC 102507 / CH34) (Ralstonia metallidurans).